A 294-amino-acid polypeptide reads, in one-letter code: Nucleotide-binding protein Tfu_2020 (294 aa).

18–25 contacts ATP; the sequence is GMSGAGRS. GTP is bound at residue 69-72; the sequence is DVRS.

The protein belongs to the RapZ-like family.

In terms of biological role, displays ATPase and GTPase activities. In Thermobifida fusca (strain YX), this protein is Nucleotide-binding protein Tfu_2020.